A 687-amino-acid chain; its full sequence is Ribonuclease E (687 aa).

An S1 motif domain is found at 35–117 (GDIYLGVVEN…LTGNITLPGR (83 aa)). Mg(2+) contacts are provided by D296 and D339. Zn(2+) is bound by residues C397 and C400. The segment at 650–687 (PIKLTETMEESEVNAASTANRRRRRRSSASDSDTGEDS) is disordered. The short motif at 670–678 (RRRRRRSSA) is the C4 Arg-rich motif, necessary and sufficient to confer PNPase binding on another protein element.

The protein belongs to the RNase E/G family. As to quaternary structure, may form homodimers or higher order multimers. Interacts with polynucleotide phosphorylase (PNPase, pnp) via the C4 Arg-rich motif (residues 670-678). A homotetramer formed by a dimer of dimers. The cofactor is Mg(2+). It depends on Zn(2+) as a cofactor.

Its subcellular location is the cytoplasm. The catalysed reaction is Endonucleolytic cleavage of single-stranded RNA in A- and U-rich regions.. Endoribonuclease that plays a central role in rRNA and tRNA processing and mRNA decay. Has been shown to act on 9S rRNA (the precursor of 5S rRNA). In Nostoc sp. (strain PCC 7120 / SAG 25.82 / UTEX 2576), this protein is Ribonuclease E.